Reading from the N-terminus, the 291-residue chain is Pantothenate synthetase 1 (291 aa).

The active-site Proton donor is the H37. An ATP-binding site is contributed by 147–150 (GEKD). Position 153 (Q153) interacts with (R)-pantoate. 184–187 (ISSR) is a binding site for ATP.

This sequence belongs to the pantothenate synthetase family. In terms of assembly, homodimer.

The protein localises to the cytoplasm. The enzyme catalyses (R)-pantoate + beta-alanine + ATP = (R)-pantothenate + AMP + diphosphate + H(+). It functions in the pathway cofactor biosynthesis; (R)-pantothenate biosynthesis; (R)-pantothenate from (R)-pantoate and beta-alanine: step 1/1. In terms of biological role, catalyzes the condensation of pantoate with beta-alanine in an ATP-dependent reaction via a pantoyl-adenylate intermediate. The polypeptide is Pantothenate synthetase 1 (Frankia alni (strain DSM 45986 / CECT 9034 / ACN14a)).